A 259-amino-acid polypeptide reads, in one-letter code: Ferritin-2, chloroplastic (259 aa).

The N-terminal 52 residues, 1–52, are a transit peptide targeting the chloroplast; it reads MLLKLAPAFTLLNSHGENLSPMLSTSSQGFVLKNFSTKSRNGLLVVCASKGS. Residues 53 to 85 form an extension peptide (EP) region; sequence NTKPLTGVVFEPFEEVKKELMLVPTVPQVSLAR. Positions 86-239 constitute a Ferritin-like diiron domain; that stretch reads HKYSDQCEAA…EYVAQLRRVG (154 aa). Positions 103, 138, 141, and 221 each coordinate Fe cation.

This sequence belongs to the ferritin family. Oligomer of 24 subunits. There are two types of subunits: L (light) chain and H (heavy) chain. The major chain can be light or heavy, depending on the species and tissue type. The functional molecule forms a roughly spherical shell with a diameter of 12 nm and contains a central cavity into which the insoluble mineral iron core is deposited.

It localises to the plastid. The protein resides in the chloroplast. The enzyme catalyses 4 Fe(2+) + O2 + 4 H(+) = 4 Fe(3+) + 2 H2O. Its function is as follows. Stores iron in a soluble, non-toxic, readily available form. Important for iron homeostasis. Has ferroxidase activity. Iron is taken up in the ferrous form and deposited as ferric hydroxides after oxidation. In Nicotiana tabacum (Common tobacco), this protein is Ferritin-2, chloroplastic (FER2).